The chain runs to 562 residues: Dihydroxy-acid dehydratase (562 aa).

Asp80 provides a ligand contact to Mg(2+). Cys121 is a binding site for [2Fe-2S] cluster. Positions 122 and 123 each coordinate Mg(2+). The residue at position 123 (Lys123) is an N6-carboxylysine. Position 194 (Cys194) interacts with [2Fe-2S] cluster. A Mg(2+)-binding site is contributed by Glu446. Ser472 functions as the Proton acceptor in the catalytic mechanism.

This sequence belongs to the IlvD/Edd family. In terms of assembly, homodimer. It depends on [2Fe-2S] cluster as a cofactor. Mg(2+) serves as cofactor.

The enzyme catalyses (2R)-2,3-dihydroxy-3-methylbutanoate = 3-methyl-2-oxobutanoate + H2O. The catalysed reaction is (2R,3R)-2,3-dihydroxy-3-methylpentanoate = (S)-3-methyl-2-oxopentanoate + H2O. It participates in amino-acid biosynthesis; L-isoleucine biosynthesis; L-isoleucine from 2-oxobutanoate: step 3/4. It functions in the pathway amino-acid biosynthesis; L-valine biosynthesis; L-valine from pyruvate: step 3/4. Functionally, functions in the biosynthesis of branched-chain amino acids. Catalyzes the dehydration of (2R,3R)-2,3-dihydroxy-3-methylpentanoate (2,3-dihydroxy-3-methylvalerate) into 2-oxo-3-methylpentanoate (2-oxo-3-methylvalerate) and of (2R)-2,3-dihydroxy-3-methylbutanoate (2,3-dihydroxyisovalerate) into 2-oxo-3-methylbutanoate (2-oxoisovalerate), the penultimate precursor to L-isoleucine and L-valine, respectively. The sequence is that of Dihydroxy-acid dehydratase from Staphylococcus aureus (strain COL).